We begin with the raw amino-acid sequence, 364 residues long: MGILTLNVEEKIKIISKNTAEIVTIDELRKKLEENQKLKGYIGFEPSGLFHIGWLIWAQKLKDLVDVGVDMSILVATWHAWINDKLGGNLDKIKLAGQYAIEVLNAYGVDMSKVRIVYAEDLVKDSNYWALVIRIAKNTSLARMKRALTIMGRKAEEAELDTSKLIYPAMQVADILYQDLDIALGGTDQRKAHMLARDVSDKLGKKKVIAIHTPLLIGLQGGQRMEGVEEDDYLASVKMSKSKPETAIFVHDPPEVVEAKLRSAYCPKGVVIDNPVLQINKYIIFAKDNATLKVERDIKYGGDIEFKSYEELEKIYSEGKLHPLDLKLATARKLNEILDPIRKKLESKTEFTLLVEELEKGVTR.

Residues Tyr41, Tyr167, Gln171, Asp174, and Gln189 each coordinate L-tyrosine. Residues 238 to 242 (KMSKS) carry the 'KMSKS' region motif. Position 241 (Lys241) interacts with ATP.

It belongs to the class-I aminoacyl-tRNA synthetase family. TyrS type 4 subfamily. As to quaternary structure, homodimer.

The protein resides in the cytoplasm. It carries out the reaction tRNA(Tyr) + L-tyrosine + ATP = L-tyrosyl-tRNA(Tyr) + AMP + diphosphate + H(+). Catalyzes the attachment of tyrosine to tRNA(Tyr) in a two-step reaction: tyrosine is first activated by ATP to form Tyr-AMP and then transferred to the acceptor end of tRNA(Tyr). This Sulfurisphaera tokodaii (strain DSM 16993 / JCM 10545 / NBRC 100140 / 7) (Sulfolobus tokodaii) protein is Tyrosine--tRNA ligase.